The following is a 316-amino-acid chain: F-box protein At4g09920 (316 aa).

An F-box domain is found at 1–47 (MDRIIGLPDEVLVKILSFVPTKVAVSTSILSKRWEFLWMWLTKLKFG).

This chain is F-box protein At4g09920, found in Arabidopsis thaliana (Mouse-ear cress).